The sequence spans 694 residues: DNA polymerase eta (694 aa).

The 250-residue stretch at 9 to 258 (VALVDMDCFF…MPIRKIRSLG (250 aa)) folds into the UmuC domain. Asp-13 and Met-14 together coordinate Mg(2+). Positions 13 and 14 each coordinate Mn(2+). An a 2'-deoxyribonucleoside 5'-triphosphate-binding site is contributed by Arg-61. Residues Asp-115 and Glu-116 each coordinate Mg(2+). Mn(2+) contacts are provided by Asp-115 and Glu-116. The active site involves Glu-116. The tract at residues 565 to 598 (DSGPDDGAVKPVSSKAVSTEMNVAGDSPNVLDSP) is disordered. The UBZ3-type zinc finger occupies 609–643 (ATEDQVLCEKCDSLVPVWDMPEHTDYHFALELQKS). Zn(2+) is bound by residues Cys-616, Cys-619, His-631, and His-635. The disordered stretch occupies residues 651–694 (KPQAIPAVSPQGKRNPKSPSASSSKRLRPHGMQTLESFFKPLTH). Residues Lys-663, Lys-667, and Lys-675 each participate in a glycyl lysine isopeptide (Lys-Gly) (interchain with G-Cter in ubiquitin) cross-link. A PIP-box motif is present at residues 682 to 689 (MQTLESFF). Lys-690 is covalently cross-linked (Glycyl lysine isopeptide (Lys-Gly) (interchain with G-Cter in ubiquitin)).

This sequence belongs to the DNA polymerase type-Y family. Interacts with REV1. Interacts with monoubiquitinated PCNA, but not unmodified PCNA. Interacts with POLI; this interaction targets POLI to the replication machinery. Interacts with PALB2 and BRCA2; the interactions are direct and are required to sustain the recruitment of POLH at blocked replication forks and to stimulate POLH-dependent DNA synthesis on D loop substrates. Interacts (via C-terminus) with TRAIP. Interacts with ubiquitin. Interacts with POLDIP2. The cofactor is Mg(2+). Requires Mn(2+) as cofactor. Monoubiquitinated by RCHY1/PIRH2. Ubiquitination depends on integrity of the UBZ3-type zinc finger domain and is enhanced by TRAIP. Ubiquitination inhibits the ability of PolH to interact with PCNA and to bypass UV-induced lesions. As to expression, ubiquitous.

It localises to the nucleus. It carries out the reaction DNA(n) + a 2'-deoxyribonucleoside 5'-triphosphate = DNA(n+1) + diphosphate. With respect to regulation, the enzyme in complex with the DNA substrate binds a third divalent metal cation. The binding of this third divalent cation, which is coordinated by water molecules and two oxygen atoms from DNA and dNTP, is essential for catalyzing the DNA synthesis. DNA polymerase specifically involved in the DNA repair by translesion synthesis (TLS). Due to low processivity on both damaged and normal DNA, cooperates with the heterotetrameric (REV3L, REV7, POLD2 and POLD3) POLZ complex for complete bypass of DNA lesions. Inserts one or 2 nucleotide(s) opposite the lesion, the primer is further extended by the tetrameric POLZ complex. In the case of 1,2-intrastrand d(GpG)-cisplatin cross-link, inserts dCTP opposite the 3' guanine. Particularly important for the repair of UV-induced pyrimidine dimers. Although inserts the correct base, may cause base transitions and transversions depending upon the context. May play a role in hypermutation at immunoglobulin genes. Forms a Schiff base with 5'-deoxyribose phosphate at abasic sites, but does not have any lyase activity, preventing the release of the 5'-deoxyribose phosphate (5'-dRP) residue. This covalent trapping of the enzyme by the 5'-dRP residue inhibits its DNA synthetic activity during base excision repair, thereby avoiding high incidence of mutagenesis. Targets POLI to replication foci. The sequence is that of DNA polymerase eta (Polh) from Mus musculus (Mouse).